The following is a 196-amino-acid chain: Imidazoleglycerol-phosphate dehydratase (196 aa).

This sequence belongs to the imidazoleglycerol-phosphate dehydratase family.

The protein localises to the cytoplasm. It carries out the reaction D-erythro-1-(imidazol-4-yl)glycerol 3-phosphate = 3-(imidazol-4-yl)-2-oxopropyl phosphate + H2O. It functions in the pathway amino-acid biosynthesis; L-histidine biosynthesis; L-histidine from 5-phospho-alpha-D-ribose 1-diphosphate: step 6/9. This Ralstonia nicotianae (strain ATCC BAA-1114 / GMI1000) (Ralstonia solanacearum) protein is Imidazoleglycerol-phosphate dehydratase.